We begin with the raw amino-acid sequence, 316 residues long: Transaldolase (316 aa).

The active-site Schiff-base intermediate with substrate is Lys131.

The protein belongs to the transaldolase family. Type 1 subfamily. In terms of assembly, homodimer.

The protein resides in the cytoplasm. It carries out the reaction D-sedoheptulose 7-phosphate + D-glyceraldehyde 3-phosphate = D-erythrose 4-phosphate + beta-D-fructose 6-phosphate. It participates in carbohydrate degradation; pentose phosphate pathway; D-glyceraldehyde 3-phosphate and beta-D-fructose 6-phosphate from D-ribose 5-phosphate and D-xylulose 5-phosphate (non-oxidative stage): step 2/3. In terms of biological role, transaldolase is important for the balance of metabolites in the pentose-phosphate pathway. The sequence is that of Transaldolase from Buchnera aphidicola subsp. Baizongia pistaciae (strain Bp).